A 244-amino-acid chain; its full sequence is Biosynthetic peptidoglycan transglycosylase (244 aa).

A helical membrane pass occupies residues 25 to 45 (LLLLLTAALLYQSWFLLHIVY).

This sequence belongs to the glycosyltransferase 51 family.

It is found in the cell inner membrane. The enzyme catalyses [GlcNAc-(1-&gt;4)-Mur2Ac(oyl-L-Ala-gamma-D-Glu-L-Lys-D-Ala-D-Ala)](n)-di-trans,octa-cis-undecaprenyl diphosphate + beta-D-GlcNAc-(1-&gt;4)-Mur2Ac(oyl-L-Ala-gamma-D-Glu-L-Lys-D-Ala-D-Ala)-di-trans,octa-cis-undecaprenyl diphosphate = [GlcNAc-(1-&gt;4)-Mur2Ac(oyl-L-Ala-gamma-D-Glu-L-Lys-D-Ala-D-Ala)](n+1)-di-trans,octa-cis-undecaprenyl diphosphate + di-trans,octa-cis-undecaprenyl diphosphate + H(+). Its pathway is cell wall biogenesis; peptidoglycan biosynthesis. In terms of biological role, peptidoglycan polymerase that catalyzes glycan chain elongation from lipid-linked precursors. This Nitrosomonas europaea (strain ATCC 19718 / CIP 103999 / KCTC 2705 / NBRC 14298) protein is Biosynthetic peptidoglycan transglycosylase.